The following is a 152-amino-acid chain: Probable flagellum biosynthesis repressor protein FlbT (152 aa).

Belongs to the FlbT family.

Functionally, has a post-transcriptional repressor function in flagellum biogenesis. Associates with the 5'-UTR of fljK mRNA and promotes its degradation. This is Probable flagellum biosynthesis repressor protein FlbT from Brucella anthropi (strain ATCC 49188 / DSM 6882 / CCUG 24695 / JCM 21032 / LMG 3331 / NBRC 15819 / NCTC 12168 / Alc 37) (Ochrobactrum anthropi).